The chain runs to 251 residues: Lactose phosphotransferase system repressor (251 aa).

The 56-residue stretch at K3–S58 folds into the HTH deoR-type domain. The segment at residues I20–D39 is a DNA-binding region (H-T-H motif).

Functionally, repressor of the lactose catabolism operon. Galactose-6-phosphate is the inducer. The polypeptide is Lactose phosphotransferase system repressor (lacR) (Staphylococcus aureus (strain MRSA252)).